A 776-amino-acid polypeptide reads, in one-letter code: Endonuclease MutS2 (776 aa).

G328–T335 is a binding site for ATP. The Smr domain occupies L701–K776.

Belongs to the DNA mismatch repair MutS family. MutS2 subfamily. In terms of assembly, homodimer. Binds to stalled ribosomes, contacting rRNA.

In terms of biological role, endonuclease that is involved in the suppression of homologous recombination and thus may have a key role in the control of bacterial genetic diversity. Functionally, acts as a ribosome collision sensor, splitting the ribosome into its 2 subunits. Detects stalled/collided 70S ribosomes which it binds and splits by an ATP-hydrolysis driven conformational change. Acts upstream of the ribosome quality control system (RQC), a ribosome-associated complex that mediates the extraction of incompletely synthesized nascent chains from stalled ribosomes and their subsequent degradation. Probably generates substrates for RQC. The sequence is that of Endonuclease MutS2 from Streptococcus mutans serotype c (strain ATCC 700610 / UA159).